Consider the following 347-residue polypeptide: Putative GDP-L-fucose synthase 2 (347 aa).

Residues 1 to 20 (MPSQQRSSSGSTAKAGDADG) are disordered. 41–47 (GHRGMVG) lines the NADP(+) pocket. Tyr-168 (proton donor/acceptor) is an active-site residue. Residues Lys-172, 195–198 (PNNL), and His-211 each bind NADP(+). Substrate is bound by residues Arg-219, Trp-234, Arg-241, and Glu-301.

It belongs to the NAD(P)-dependent epimerase/dehydratase family. Fucose synthase subfamily. Homodimer.

The catalysed reaction is GDP-beta-L-fucose + NADP(+) = GDP-4-dehydro-alpha-D-rhamnose + NADPH + H(+). Its pathway is nucleotide-sugar biosynthesis; GDP-L-fucose biosynthesis via de novo pathway; GDP-L-fucose from GDP-alpha-D-mannose: step 2/2. Catalyzes the two-step NADP-dependent conversion of GDP-4-dehydro-6-deoxy-D-mannose to GDP-fucose, involving an epimerase and a reductase reaction. This chain is Putative GDP-L-fucose synthase 2, found in Oryza sativa subsp. japonica (Rice).